Reading from the N-terminus, the 662-residue chain is 72 kDa type IV collagenase (662 aa).

The signal sequence occupies residues 1–29 (MEALGARGALAGFLRALCVLGCLLGRATA). Residues 30 to 109 (PPSPVIKFPG…PRCGNPDVAN (80 aa)) constitute a propeptide, activation peptide. The Cysteine switch signature appears at 100-107 (PRCGNPDV). Cys-102 is a Zn(2+) binding site. The collagenase-like 1 stretch occupies residues 110–221 (YNFFPRKPKW…LWTLGEGQVV (112 aa)). Ca(2+)-binding residues include Asp-134 and Asp-168. Zn(2+) contacts are provided by His-178 and Asp-180. Asp-185 and Gly-186 together coordinate Ca(2+). His-193 contributes to the Zn(2+) binding site. Ca(2+) is bound by residues Gly-200, Gly-202, and Asp-204. His-206 serves as a coordination point for Zn(2+). Asp-208, Asp-209, and Glu-211 together coordinate Ca(2+). Residues 222–396 (RVKYGNADGE…WGFCPDQGYS (175 aa)) are collagen-binding. Fibronectin type-II domains are found at residues 228–276 (ADGE…FCPH), 286–334 (ADGQ…FCPE), and 344–392 (SEGA…FCPD). 6 disulfide bridges follow: Cys-233-Cys-259, Cys-247-Cys-274, Cys-291-Cys-317, Cys-305-Cys-332, Cys-349-Cys-375, and Cys-363-Cys-390. The interval 397-467 (LFLVAAHEFG…GPTPTLGPVT (71 aa)) is collagenase-like 2. Position 403 (His-403) interacts with Zn(2+). Glu-404 is a catalytic residue. Zn(2+) contacts are provided by His-407 and His-413. Residues 414–662 (SQDPGALMAP…GSIKTDWLGC (249 aa)) form a required for inhibitor TIMP2 binding region. Cys-471 and Cys-662 are oxidised to a cystine. 4 Hemopexin repeats span residues 474-518 (DIVF…WPEL), 519-565 (PEKI…GLPP), 567-615 (VQRV…WNAI), and 616-662 (PDHL…WLGC). Asp-478, Asp-523, and Asp-571 together coordinate Ca(2+). N-linked (GlcNAc...) asparagine glycosylation occurs at Asn-575. Asp-620 contributes to the Ca(2+) binding site. Asn-644 carries N-linked (GlcNAc...) asparagine glycosylation.

It belongs to the peptidase M10A family. Interacts (via the C-terminal hemopexin-like domains-containing region) with the integrin alpha-V/beta-3; the interaction promotes vascular invasion in angiogenic vessels and melamoma cells. Interacts (via the C-terminal PEX domain) with TIMP2 (via the C-terminal); the interaction inhibits the degradation activity. Interacts with GSK3B. Ca(2+) is required as a cofactor. Zn(2+) serves as cofactor. Phosphorylation on multiple sites modulates enzymatic activity. Phosphorylated by PKC in vitro. In terms of processing, the propeptide is processed by MMP14 (MT-MMP1) and MMP16 (MT-MMP3). Autocatalytic cleavage in the C-terminal produces the anti-angiogenic peptide, PEX. This processing appears to be facilitated by binding integrinv/beta3.

The protein localises to the secreted. It is found in the extracellular space. Its subcellular location is the extracellular matrix. The protein resides in the membrane. It localises to the nucleus. It carries out the reaction Cleavage of gelatin type I and collagen types IV, V, VII, X. Cleaves the collagen-like sequence Pro-Gln-Gly-|-Ile-Ala-Gly-Gln.. Ubiquitinous metalloproteinase that is involved in diverse functions such as remodeling of the vasculature, angiogenesis, tissue repair, tumor invasion, inflammation, and atherosclerotic plaque rupture. As well as degrading extracellular matrix proteins, can also act on several nonmatrix proteins such as big endothelial 1 and beta-type CGRP promoting vasoconstriction. Also cleaves KISS at a Gly-|-Leu bond. Appears to have a role in myocardial cell death pathways. Contributes to myocardial oxidative stress by regulating the activity of GSK3beta. Cleaves GSK3beta in vitro. Involved in the formation of the fibrovascular tissues. Its function is as follows. PEX, the C-terminal non-catalytic fragment of MMP2, possesses anti-angiogenic and anti-tumor properties and inhibits cell migration and cell adhesion to FGF2 and vitronectin. Ligand for integrin alpha-v/beta-3 on the surface of blood vessels. The protein is 72 kDa type IV collagenase (MMP2) of Oryctolagus cuniculus (Rabbit).